The sequence spans 349 residues: Mitogen-activated protein kinase sty1 (349 aa).

In terms of domain architecture, Protein kinase spans 20–299 (YSDLQPIGMG…AADALAHNYL (280 aa)). ATP is bound by residues 26-34 (IGMGAFGLV) and Lys49. The Proton acceptor role is filled by Asp141. Thr171 bears the Phosphothreonine mark. Positions 171–173 (TGY) match the TXY motif. Tyr173 bears the Phosphotyrosine mark. Phosphoserine is present on Ser175. Phosphothreonine is present on Thr176. Positions 176 to 178 (TRY) match the TXY motif.

Belongs to the protein kinase superfamily. Ser/Thr protein kinase family. MAP kinase subfamily. HOG1 sub-subfamily. As to quaternary structure, interacts with cdc37, cmk2, hal4, sin1 and srk1. The cofactor is Mg(2+). Post-translationally, dually phosphorylated on Thr-171 and Tyr-173, which activates the enzyme. Phosphorylated by wis1 in response to osmotic stress, nutrient limitation, hydrogen peroxide and arsenite. Dephosphorylated by pyp1 and pyp2.

It localises to the cytoplasm. It is found in the nucleus. The catalysed reaction is L-seryl-[protein] + ATP = O-phospho-L-seryl-[protein] + ADP + H(+). The enzyme catalyses L-threonyl-[protein] + ATP = O-phospho-L-threonyl-[protein] + ADP + H(+). With respect to regulation, activated by the MAPK kinase wisl, and negatively regulated by pypl and pyp2 tyrosine phosphatases. Functionally, proline-directed serine/threonine-protein kinase involved in a signal transduction pathway that is activated by changes in the osmolarity of the extracellular environment. Controls osmotic regulation of transcription of target genes. Involved in osmoregulation and stress response pathways leading to an efficient start of sexual differentiation. Supports translation initiation and facilitates adaptation to environmental stress in part through reducing eIF2-alpha phosphorylation. Links the cell-cycle G2/M control with changes in the extracellular environment that affect cell physiology. Phosphorylates atf1 and mkp1. In conjunction with hal4, has a role in the cellular resistance to toxic cations such as Na(+), Li(+) and Ca(2+). Involved in resistance to arsenite, methylglyoxal and hydrogen peroxide. Involved in induction of thermotolerance in mRNA export, as well as in vacuolar fission. The sequence is that of Mitogen-activated protein kinase sty1 (sty1) from Schizosaccharomyces pombe (strain 972 / ATCC 24843) (Fission yeast).